Here is a 126-residue protein sequence, read N- to C-terminus: UPF0538 protein C2orf76 homolog (126 aa).

This sequence belongs to the UPF0538 family.

In Bos taurus (Bovine), this protein is UPF0538 protein C2orf76 homolog.